A 66-amino-acid chain; its full sequence is Beta-toxin ChFII.9 (66 aa).

The LCN-type CS-alpha/beta domain occupies 1–66 (KEGYIVDYHT…VWPLPNKRCK (66 aa)). Cystine bridges form between C12/C65, C16/C41, C25/C46, and C29/C48. At K66 the chain carries Lysine amide.

As to expression, expressed by the venom gland.

The protein resides in the secreted. Functionally, beta toxins bind voltage independently at site-4 of sodium channels (Nav) and shift the activation voltage toward more negative potentials, thereby affecting sodium channel activation CC and promoting spontaneous and repetitive firing. The polypeptide is Beta-toxin ChFII.9 (Centruroides hirsutipalpus (Scorpion)).